A 688-amino-acid chain; its full sequence is MGQEKLYIEKELSWLSFNERVLQEAADKSNPLIERMRFLGIYSNNLDEFYKVRFAELKRRIIISEEQGSNSHSRHLLGKIQSRVLKADQEFDGLYNELLLEMARNQIFLINERQLSVNQQNWLRHYFKQYLRQHITPILINPDTDLVQFLKDDYTYLAVEIIRGDTIRYALLEIPSDKVPRFVNLPPEAPRRRKPMILLDNILRYCLDDIFKGFFDYDALNAYSMKMTRDAEYDLVHEMEASLMELMSSSLKQRLTAEPVRFVYQRDMPNALVEVLREKLTISRYDSIVPGGRYHNFKDFINFPNVGKANLVNKPLPRLRHIWFDKAQFRNGFDAIRERDVLLYYPYHTFEHVLELLRQASFDPSVLAIKINIYRVAKDSRIIDSMIHAAHNGKKVTVVVELQARFDEEANIHWAKRLTEAGVHVIFSAPGLKIHAKLFLISRKENGEVVRYAHIGTGNFNEKTARLYTDYSLLTADARITNEVRRVFNFIENPYRPVTFDYLMVSPQNSRRLLYEMVDREIANAQQGLPSGITLKLNNLVDKGLVDRLYAASSSGVPVNLLVRGMCSLIPNLEGISDNIRAISIVDRYLEHDRVYIFENGGDKKVYLSSADWMTRNIDYRIEVATPLLDPRLKQRVLDIIDILFSDTVKARYIDKELSNRYVPRGNRRKVRAQLAIYDYIKSLEQSE.

Asn45 serves as a coordination point for ATP. 2 residues coordinate Mg(2+): Arg375 and Arg405. A PLD phosphodiesterase domain is found at Pro430–Thr464. Residue His435 is the Phosphohistidine intermediate of the active site. Positions 468, 564, and 592 each coordinate ATP.

It belongs to the polyphosphate kinase 1 (PPK1) family. It depends on Mg(2+) as a cofactor. Post-translationally, an intermediate of this reaction is the autophosphorylated ppk in which a phosphate is covalently linked to a histidine residue through a N-P bond.

It carries out the reaction [phosphate](n) + ATP = [phosphate](n+1) + ADP. Catalyzes the reversible transfer of the terminal phosphate of ATP to form a long-chain polyphosphate (polyP). This is Polyphosphate kinase from Escherichia coli O6:H1 (strain CFT073 / ATCC 700928 / UPEC).